The following is a 436-amino-acid chain: 3-hydroxy-3-methylglutaryl-coenzyme A reductase (436 aa).

Residues Glu-99, Lys-277, and Asp-293 each act as charge relay system in the active site. Residue His-390 is the Proton donor of the active site.

The protein belongs to the HMG-CoA reductase family.

It catalyses the reaction (R)-mevalonate + 2 NADP(+) + CoA = (3S)-3-hydroxy-3-methylglutaryl-CoA + 2 NADPH + 2 H(+). It functions in the pathway metabolic intermediate biosynthesis; (R)-mevalonate biosynthesis; (R)-mevalonate from acetyl-CoA: step 3/3. Converts HMG-CoA to mevalonate. The sequence is that of 3-hydroxy-3-methylglutaryl-coenzyme A reductase (hmgA) from Archaeoglobus fulgidus (strain ATCC 49558 / DSM 4304 / JCM 9628 / NBRC 100126 / VC-16).